Reading from the N-terminus, the 521-residue chain is Maturase K (521 aa).

This sequence belongs to the intron maturase 2 family. MatK subfamily.

The protein resides in the plastid. It is found in the chloroplast. In terms of biological role, usually encoded in the trnK tRNA gene intron. Probably assists in splicing its own and other chloroplast group II introns. The sequence is that of Maturase K from Trillium erectum (Beth root).